Consider the following 557-residue polypeptide: DNA ligase (557 aa).

Glutamate 251 is a binding site for ATP. Catalysis depends on lysine 253, which acts as the N6-AMP-lysine intermediate. The ATP site is built by arginine 258, arginine 273, glutamate 303, phenylalanine 342, arginine 418, and lysine 424.

It belongs to the ATP-dependent DNA ligase family. Mg(2+) serves as cofactor.

The enzyme catalyses ATP + (deoxyribonucleotide)n-3'-hydroxyl + 5'-phospho-(deoxyribonucleotide)m = (deoxyribonucleotide)n+m + AMP + diphosphate.. DNA ligase that seals nicks in double-stranded DNA during DNA replication, DNA recombination and DNA repair. This is DNA ligase from Methanosphaera stadtmanae (strain ATCC 43021 / DSM 3091 / JCM 11832 / MCB-3).